The following is a 144-amino-acid chain: Conopressin-conophysin (144 aa).

The signal sequence occupies residues 1–27; it reads MTRSALQMGRLTLVLCLLLQLVLVTQA. Cys28 and Cys33 form a disulfide bridge. Position 36 is an aspartic acid 1-amide (Asp36). Residues 37–44 constitute a propeptide that is removed on maturation; the sequence is GERDVDGR. Cystine bridges form between Cys50–Cys90, Cys53–Cys64, Cys58–Cys80, Cys65–Cys70, Cys97–Cys117, Cys109–Cys129, and Cys118–Cys123. The propeptide occupies 131 to 144; it reads KESKSGIRVGCQRS.

The protein belongs to the vasopressin/oxytocin family. In terms of tissue distribution, expressed by the venom duct.

It localises to the secreted. This Conus bayani (Bayan's cone) protein is Conopressin-conophysin.